Consider the following 426-residue polypeptide: Delta-aminolevulinic acid dehydratase, chloroplastic (426 aa).

Residues Met1–Arg45 constitute a chloroplast transit peptide. Residues Gly74–Arg107 form a disordered region. The active-site Schiff-base intermediate with substrate is Lys293. Residues Arg303 and Lys315 each contribute to the 5-aminolevulinate site. Glu331 is a binding site for Mg(2+). Lys346 serves as the catalytic Schiff-base intermediate with substrate. 5-aminolevulinate-binding residues include Ser372 and Tyr411.

Belongs to the ALAD family. As to quaternary structure, homooctamer. It depends on Mg(2+) as a cofactor.

It localises to the plastid. The protein resides in the chloroplast. It carries out the reaction 2 5-aminolevulinate = porphobilinogen + 2 H2O + H(+). It functions in the pathway porphyrin-containing compound metabolism; protoporphyrin-IX biosynthesis; coproporphyrinogen-III from 5-aminolevulinate: step 1/4. Catalyzes an early step in the biosynthesis of tetrapyrroles. Binds two molecules of 5-aminolevulinate per subunit, each at a distinct site, and catalyzes their condensation to form porphobilinogen. In Oryza sativa subsp. japonica (Rice), this protein is Delta-aminolevulinic acid dehydratase, chloroplastic (HEMB).